The primary structure comprises 124 residues: Small ribosomal subunit protein uS12 (124 aa).

The segment at 8-30 is disordered; it reads IRSARQDTEKQTKSPALKSCPQR. A 3-methylthioaspartic acid modification is found at aspartate 89. Residues 103–124 form a disordered region; the sequence is DTAGVKDRKQSRSKYGAKKPKA. Residues 113-124 are compositionally biased toward basic residues; sequence SRSKYGAKKPKA.

The protein belongs to the universal ribosomal protein uS12 family. In terms of assembly, part of the 30S ribosomal subunit. Contacts proteins S8 and S17. May interact with IF1 in the 30S initiation complex.

Functionally, with S4 and S5 plays an important role in translational accuracy. Interacts with and stabilizes bases of the 16S rRNA that are involved in tRNA selection in the A site and with the mRNA backbone. Located at the interface of the 30S and 50S subunits, it traverses the body of the 30S subunit contacting proteins on the other side and probably holding the rRNA structure together. The combined cluster of proteins S8, S12 and S17 appears to hold together the shoulder and platform of the 30S subunit. The sequence is that of Small ribosomal subunit protein uS12 from Trichodesmium erythraeum (strain IMS101).